Consider the following 235-residue polypeptide: Ribosomal RNA large subunit methyltransferase E (235 aa).

S-adenosyl-L-methionine is bound by residues glycine 76, tryptophan 78, aspartate 99, aspartate 115, and aspartate 139. Residue lysine 179 is the Proton acceptor of the active site.

The protein belongs to the class I-like SAM-binding methyltransferase superfamily. RNA methyltransferase RlmE family.

The protein localises to the cytoplasm. It carries out the reaction uridine(2552) in 23S rRNA + S-adenosyl-L-methionine = 2'-O-methyluridine(2552) in 23S rRNA + S-adenosyl-L-homocysteine + H(+). In terms of biological role, specifically methylates the uridine in position 2552 of 23S rRNA at the 2'-O position of the ribose in the fully assembled 50S ribosomal subunit. This is Ribosomal RNA large subunit methyltransferase E from Rhodopseudomonas palustris (strain BisB5).